We begin with the raw amino-acid sequence, 275 residues long: Ribosomal protein L11 methyltransferase (275 aa).

S-adenosyl-L-methionine is bound by residues Thr-123, Gly-146, Asp-167, and Asn-208.

This sequence belongs to the methyltransferase superfamily. PrmA family.

The protein resides in the cytoplasm. It carries out the reaction L-lysyl-[protein] + 3 S-adenosyl-L-methionine = N(6),N(6),N(6)-trimethyl-L-lysyl-[protein] + 3 S-adenosyl-L-homocysteine + 3 H(+). In terms of biological role, methylates ribosomal protein L11. The chain is Ribosomal protein L11 methyltransferase from Campylobacter fetus subsp. fetus (strain 82-40).